The primary structure comprises 358 residues: Protein UL24 (358 aa).

It belongs to the herpesviridae US22 family.

It localises to the virion tegument. The polypeptide is Protein UL24 (UL24) (Homo sapiens (Human)).